Reading from the N-terminus, the 1754-residue chain is Intraflagellar transport protein 172 homolog (1754 aa).

WD repeat units lie at residues 14–53 (EQIQ…RDKF), 64–103 (KNSY…NDKK), 110–149 (PQAS…QSLY), 151–190 (GDSI…EPLG), 194–232 (QHPV…RTFD), 283–322 (ACLY…TVWQ), and 519–557 (TLLS…EHVT). 11 TPR repeats span residues 623 to 656 (KAMW…SKAY), 690 to 723 (GSDL…DEAV), 748 to 781 (SEQQ…ARAA), 807 to 840 (SELY…ARAL), 852 to 885 (TALE…QKAL), 1041 to 1074 (RGKL…EDGY), 1140 to 1166 (DEVH…FLKA), 1167 to 1199 (NKPR…AVGE), 1211 to 1250 (TSNY…AEEH), 1282 to 1315 (SRSY…NAED), and 1698 to 1733 (FPVR…SPGS).

It belongs to the IFT172 family.

It is found in the cell projection. Its subcellular location is the cilium. Functionally, required for the maintenance and formation of cilia. The protein is Intraflagellar transport protein 172 homolog of Drosophila melanogaster (Fruit fly).